The chain runs to 1073 residues: Self-sufficient cytochrome P450 monooxygenase CYP505AG1 (1073 aa).

Cys409 provides a ligand contact to heme. The Flavodoxin-like domain occupies 501–644; sequence VTILYGSNSG…DLENWEDEHL (144 aa). FMN contacts are provided by residues 507–511 and 588–620; these read SNSGT and VFACGHHDWAKTFYKVPIMIDELLARAGAHRVA. Residues 680 to 909 form the FAD-binding FR-type domain; the sequence is HNAVECIVSE…RPCKKQFHLP (230 aa).

This sequence in the N-terminal section; belongs to the cytochrome P450 family. Requires FAD as cofactor. It depends on FMN as a cofactor. Heme is required as a cofactor.

It carries out the reaction 2 oxidized [cytochrome P450] + NADPH = 2 reduced [cytochrome P450] + NADP(+) + H(+). The catalysed reaction is an organic molecule + reduced [NADPH--hemoprotein reductase] + O2 = an alcohol + oxidized [NADPH--hemoprotein reductase] + H2O + H(+). The enzyme catalyses dodecanoate + reduced [NADPH--hemoprotein reductase] + O2 = 10-hydroxydodecanoate + oxidized [NADPH--hemoprotein reductase] + H2O + H(+). It catalyses the reaction tetradecanoate + reduced [NADPH--hemoprotein reductase] + O2 = 12-hydroxytetradecanoate + oxidized [NADPH--hemoprotein reductase] + H2O + H(+). Self-sufficient cytochrome P450 monooxygenase that catalyzes the regioselective in-chain hydroxylation of alkanes, fatty alcohols, and fatty acids, giving sub-terminal hydroxylation by acting preferentially on the omega-2 position. Prefers fatty acids as substrates, since it hydroxylates the small amounts of dodecanoic acid formed in the presence of an excess of 1-dodecanol. The polypeptide is Self-sufficient cytochrome P450 monooxygenase CYP505AG1 (Oidiodendron maius (strain Zn)).